Reading from the N-terminus, the 388-residue chain is Putative membrane protein MJ1562 (388 aa).

6 helical membrane-spanning segments follow: residues 22 to 42, 219 to 239, 246 to 266, 273 to 293, 320 to 340, and 351 to 371; these read FLML…ATNV, SQSF…IIYF, IMPL…MGLL, ATAG…IHLM, AVMA…LAPL, and ALGI…LIVI.

It belongs to the resistance-nodulation-cell division (RND) (TC 2.A.6) family. MmpL subfamily.

It localises to the cell membrane. The polypeptide is Putative membrane protein MJ1562 (Methanocaldococcus jannaschii (strain ATCC 43067 / DSM 2661 / JAL-1 / JCM 10045 / NBRC 100440) (Methanococcus jannaschii)).